Here is a 333-residue protein sequence, read N- to C-terminus: Cytochrome f (333 aa).

The N-terminal stretch at 1–44 is a signal peptide; that stretch reads MRNACTRARLTRTARAMVKTLFIAIASVTFFFTSDLALPQSAAA. Heme-binding residues include tyrosine 45, cysteine 66, cysteine 69, and histidine 70. Residues 299-318 form a helical membrane-spanning segment; sequence VGWLIAFVALVMLAQVMLVL.

This sequence belongs to the cytochrome f family. The 4 large subunits of the cytochrome b6-f complex are cytochrome b6, subunit IV (17 kDa polypeptide, PetD), cytochrome f and the Rieske protein, while the 4 small subunits are PetG, PetL, PetM and PetN. The complex functions as a dimer. It depends on heme as a cofactor.

It is found in the cellular thylakoid membrane. Component of the cytochrome b6-f complex, which mediates electron transfer between photosystem II (PSII) and photosystem I (PSI), cyclic electron flow around PSI, and state transitions. The protein is Cytochrome f of Trichormus variabilis (strain ATCC 29413 / PCC 7937) (Anabaena variabilis).